Reading from the N-terminus, the 237-residue chain is Uracil-DNA glycosylase (237 aa).

The Proton acceptor role is filled by D77.

The protein belongs to the uracil-DNA glycosylase (UDG) superfamily. UNG family.

The protein localises to the cytoplasm. It carries out the reaction Hydrolyzes single-stranded DNA or mismatched double-stranded DNA and polynucleotides, releasing free uracil.. In terms of biological role, excises uracil residues from the DNA which can arise as a result of misincorporation of dUMP residues by DNA polymerase or due to deamination of cytosine. In Acinetobacter baumannii (strain SDF), this protein is Uracil-DNA glycosylase.